The following is a 668-amino-acid chain: DNA ligase (668 aa).

NAD(+) contacts are provided by residues 37-41 (DNVYD), 86-87 (SM), and glutamate 116. The active-site N6-AMP-lysine intermediate is lysine 118. 4 residues coordinate NAD(+): arginine 139, glutamate 173, lysine 288, and lysine 312. The Zn(2+) site is built by cysteine 406, cysteine 409, cysteine 424, and cysteine 429. One can recognise a BRCT domain in the interval 591-668 (IPDNPFKDKT…TEEEAIAQIK (78 aa)).

This sequence belongs to the NAD-dependent DNA ligase family. LigA subfamily. Mg(2+) is required as a cofactor. It depends on Mn(2+) as a cofactor.

It catalyses the reaction NAD(+) + (deoxyribonucleotide)n-3'-hydroxyl + 5'-phospho-(deoxyribonucleotide)m = (deoxyribonucleotide)n+m + AMP + beta-nicotinamide D-nucleotide.. Functionally, DNA ligase that catalyzes the formation of phosphodiester linkages between 5'-phosphoryl and 3'-hydroxyl groups in double-stranded DNA using NAD as a coenzyme and as the energy source for the reaction. It is essential for DNA replication and repair of damaged DNA. This Lactobacillus acidophilus (strain ATCC 700396 / NCK56 / N2 / NCFM) protein is DNA ligase.